The primary structure comprises 264 residues: Rhamnosyltransferase WbbL (264 aa).

Belongs to the glycosyltransferase 2 family.

The protein operates within bacterial outer membrane biogenesis; lipopolysaccharide biosynthesis. Its function is as follows. Rhamnosyltransferase involved in lipopolysaccharide biosynthesis. This is Rhamnosyltransferase WbbL (wbbL) from Escherichia coli (strain K12).